Reading from the N-terminus, the 60-residue chain is DNA-directed RNA polymerase subunit Rpo6 (60 aa).

It belongs to the archaeal Rpo6/eukaryotic RPB6 RNA polymerase subunit family. In terms of assembly, part of the RNA polymerase complex.

It is found in the cytoplasm. It carries out the reaction RNA(n) + a ribonucleoside 5'-triphosphate = RNA(n+1) + diphosphate. DNA-dependent RNA polymerase (RNAP) catalyzes the transcription of DNA into RNA using the four ribonucleoside triphosphates as substrates. The protein is DNA-directed RNA polymerase subunit Rpo6 of Halobacterium salinarum (strain ATCC 700922 / JCM 11081 / NRC-1) (Halobacterium halobium).